Reading from the N-terminus, the 138-residue chain is Glutaredoxin-C7 (138 aa).

The interval 17 to 40 (SSTRGGGGGGMLGLTLFDPPGGEQ) is disordered. In terms of domain architecture, Glutaredoxin spans 42–137 (AERIGRLVRE…PRLREVGALC (96 aa)). Cysteines 62 and 65 form a disulfide.

It belongs to the glutaredoxin family. CC-type subfamily.

It localises to the cytoplasm. In terms of biological role, has a glutathione-disulfide oxidoreductase activity in the presence of NADPH and glutathione reductase. Reduces low molecular weight disulfides and proteins. This Oryza sativa subsp. japonica (Rice) protein is Glutaredoxin-C7 (GRXC7).